A 149-amino-acid polypeptide reads, in one-letter code: Cytochrome c' (149 aa).

Positions 1–19 are cleaved as a signal peptide; sequence MRRVLLATLMAALPAAAMA. Positions 29, 89, 90, 138, 141, and 142 each coordinate heme c.

In terms of assembly, monomer and homodimer. Binds 1 heme c group covalently per subunit.

Its function is as follows. Cytochrome c' is the most widely occurring bacterial c-type cytochrome. Cytochromes c' are high-spin proteins and the heme has no sixth ligand. Their exact function is not known. In Cereibacter sphaeroides (strain ATCC 17023 / DSM 158 / JCM 6121 / CCUG 31486 / LMG 2827 / NBRC 12203 / NCIMB 8253 / ATH 2.4.1.) (Rhodobacter sphaeroides), this protein is Cytochrome c' (cycP).